The primary structure comprises 120 residues: Immunoglobulin kappa variable 2-24 (120 aa).

The signal sequence occupies residues 1-19 (MRLLAQLLGLLMLWVPGSS). The Ig-like domain occupies 20–120 (GDIVMTQTPL…YYCMQATQFP (101 aa)). Positions 21 to 43 (DIVMTQTPLSSPVTLGQPASISC) are framework-1. The cysteines at positions 43 and 113 are disulfide-linked. Residues 44–59 (RSSQSLVHSDGNTYLS) form a complementarity-determining-1 region. A framework-2 region spans residues 60–74 (WLQQRPGQPPRLLIY). The interval 75-81 (KISNRFS) is complementarity-determining-2. The segment at 82–113 (GVPDRFSGSGAGTDFTLKISRVEAEDVGVYYC) is framework-3. Residues 114–120 (MQATQFP) form a complementarity-determining-3 region.

In terms of assembly, immunoglobulins are composed of two identical heavy chains and two identical light chains; disulfide-linked.

The protein localises to the secreted. The protein resides in the cell membrane. Functionally, v region of the variable domain of immunoglobulin light chains that participates in the antigen recognition. Immunoglobulins, also known as antibodies, are membrane-bound or secreted glycoproteins produced by B lymphocytes. In the recognition phase of humoral immunity, the membrane-bound immunoglobulins serve as receptors which, upon binding of a specific antigen, trigger the clonal expansion and differentiation of B lymphocytes into immunoglobulins-secreting plasma cells. Secreted immunoglobulins mediate the effector phase of humoral immunity, which results in the elimination of bound antigens. The antigen binding site is formed by the variable domain of one heavy chain, together with that of its associated light chain. Thus, each immunoglobulin has two antigen binding sites with remarkable affinity for a particular antigen. The variable domains are assembled by a process called V-(D)-J rearrangement and can then be subjected to somatic hypermutations which, after exposure to antigen and selection, allow affinity maturation for a particular antigen. This chain is Immunoglobulin kappa variable 2-24, found in Homo sapiens (Human).